The primary structure comprises 142 residues: Small ribosomal subunit protein uS12 (142 aa).

Belongs to the universal ribosomal protein uS12 family. Part of the 30S ribosomal subunit.

In terms of biological role, with S4 and S5 plays an important role in translational accuracy. Located at the interface of the 30S and 50S subunits. This is Small ribosomal subunit protein uS12 from Methanoregula boonei (strain DSM 21154 / JCM 14090 / 6A8).